The chain runs to 411 residues: Ornithine aminotransferase (411 aa).

Lys257 carries the post-translational modification N6-(pyridoxal phosphate)lysine.

This sequence belongs to the class-III pyridoxal-phosphate-dependent aminotransferase family. OAT subfamily. Pyridoxal 5'-phosphate is required as a cofactor.

It localises to the cytoplasm. It carries out the reaction a 2-oxocarboxylate + L-ornithine = L-glutamate 5-semialdehyde + an L-alpha-amino acid. It participates in amino-acid biosynthesis; L-proline biosynthesis; L-glutamate 5-semialdehyde from L-ornithine: step 1/1. In terms of biological role, catalyzes the interconversion of ornithine to glutamate semialdehyde. This chain is Ornithine aminotransferase, found in Bordetella bronchiseptica (strain ATCC BAA-588 / NCTC 13252 / RB50) (Alcaligenes bronchisepticus).